A 24-amino-acid chain; its full sequence is Brevinin-1R (24 aa).

Cysteines 18 and 24 form a disulfide.

Expressed by the skin glands.

The protein localises to the secreted. Functionally, antimicrobial peptide. The sequence is that of Brevinin-1R from Pelophylax ridibundus (Marsh frog).